The chain runs to 426 residues: Metacaspase-1B (426 aa).

Positions 1–14 (MSGYPGAGYNGGGY) are enriched in gly residues. The disordered stretch occupies residues 1 to 111 (MSGYPGAGYN…QAPPPPPQAP (111 aa)). Over residues 21–68 (QYGGYYPPQPAYNAYQQPPPQQQQYMVYHQPSPGPQQHQHWNPQQQTP) the composition is skewed to low complexity. Catalysis depends on residues His217 and Cys273.

The protein belongs to the peptidase C14B family.

In terms of biological role, involved in cell death (apoptosis). In Neurospora crassa (strain ATCC 24698 / 74-OR23-1A / CBS 708.71 / DSM 1257 / FGSC 987), this protein is Metacaspase-1B (casB).